A 226-amino-acid polypeptide reads, in one-letter code: UPF0758 protein GWCH70_2550 (226 aa).

The region spanning 104-226 (VIRSPEDGAK…FVSLKEKGYV (123 aa)) is the MPN domain. The Zn(2+) site is built by His-175, His-177, and Asp-188. Residues 175 to 188 (HNHPSGDPTPSRED) carry the JAMM motif motif.

Belongs to the UPF0758 family.

In Geobacillus sp. (strain WCH70), this protein is UPF0758 protein GWCH70_2550.